A 415-amino-acid polypeptide reads, in one-letter code: Serine hydroxymethyltransferase (415 aa).

(6S)-5,6,7,8-tetrahydrofolate contacts are provided by residues leucine 117 and 121–123; that span reads GHL. At lysine 225 the chain carries N6-(pyridoxal phosphate)lysine. Position 349-351 (349-351) interacts with (6S)-5,6,7,8-tetrahydrofolate; sequence SPF.

Belongs to the SHMT family. Homodimer. The cofactor is pyridoxal 5'-phosphate.

The protein resides in the cytoplasm. It catalyses the reaction (6R)-5,10-methylene-5,6,7,8-tetrahydrofolate + glycine + H2O = (6S)-5,6,7,8-tetrahydrofolate + L-serine. The protein operates within one-carbon metabolism; tetrahydrofolate interconversion. Its pathway is amino-acid biosynthesis; glycine biosynthesis; glycine from L-serine: step 1/1. Its function is as follows. Catalyzes the reversible interconversion of serine and glycine with tetrahydrofolate (THF) serving as the one-carbon carrier. This reaction serves as the major source of one-carbon groups required for the biosynthesis of purines, thymidylate, methionine, and other important biomolecules. Also exhibits THF-independent aldolase activity toward beta-hydroxyamino acids, producing glycine and aldehydes, via a retro-aldol mechanism. The polypeptide is Serine hydroxymethyltransferase (Nitratiruptor sp. (strain SB155-2)).